The primary structure comprises 354 residues: S-adenosylmethionine:tRNA ribosyltransferase-isomerase (354 aa).

It belongs to the QueA family. Monomer.

The protein localises to the cytoplasm. It catalyses the reaction 7-aminomethyl-7-carbaguanosine(34) in tRNA + S-adenosyl-L-methionine = epoxyqueuosine(34) in tRNA + adenine + L-methionine + 2 H(+). The protein operates within tRNA modification; tRNA-queuosine biosynthesis. In terms of biological role, transfers and isomerizes the ribose moiety from AdoMet to the 7-aminomethyl group of 7-deazaguanine (preQ1-tRNA) to give epoxyqueuosine (oQ-tRNA). In Klebsiella pneumoniae (strain 342), this protein is S-adenosylmethionine:tRNA ribosyltransferase-isomerase.